We begin with the raw amino-acid sequence, 266 residues long: Glutamate racemase 1 (266 aa).

Substrate is bound by residues 11–12 (DS) and 43–44 (YG). Residue cysteine 74 is the Proton donor/acceptor of the active site. Substrate is bound at residue 75-76 (NT). Cysteine 182 functions as the Proton donor/acceptor in the catalytic mechanism. Substrate is bound at residue 183-184 (TH).

It belongs to the aspartate/glutamate racemases family.

It catalyses the reaction L-glutamate = D-glutamate. Its pathway is cell wall biogenesis; peptidoglycan biosynthesis. In terms of biological role, provides the (R)-glutamate required for cell wall biosynthesis. This chain is Glutamate racemase 1, found in Caldanaerobacter subterraneus subsp. tengcongensis (strain DSM 15242 / JCM 11007 / NBRC 100824 / MB4) (Thermoanaerobacter tengcongensis).